A 682-amino-acid polypeptide reads, in one-letter code: Potassium-transporting ATPase ATP-binding subunit (682 aa).

Helical transmembrane passes span 34 to 54 (PVMF…LAMV), 58 to 78 (IAGS…TVLF), 219 to 239 (IALT…TATL), and 254 to 274 (VLVA…LSAI). Asp307 (4-aspartylphosphate intermediate) is an active-site residue. ATP is bound by residues Asp344, Glu348, 377 to 384 (FTAQSRMS), and Lys395. Positions 518 and 522 each coordinate Mg(2+). 3 consecutive transmembrane segments (helical) span residues 588–608 (FAII…LNVM), 616–636 (AILS…PLAL), and 662–682 (LVVP…LGLA).

The protein belongs to the cation transport ATPase (P-type) (TC 3.A.3) family. Type IA subfamily. In terms of assembly, the system is composed of three essential subunits: KdpA, KdpB and KdpC.

It is found in the cell inner membrane. The enzyme catalyses K(+)(out) + ATP + H2O = K(+)(in) + ADP + phosphate + H(+). In terms of biological role, part of the high-affinity ATP-driven potassium transport (or Kdp) system, which catalyzes the hydrolysis of ATP coupled with the electrogenic transport of potassium into the cytoplasm. This subunit is responsible for energy coupling to the transport system and for the release of the potassium ions to the cytoplasm. This is Potassium-transporting ATPase ATP-binding subunit from Salmonella agona (strain SL483).